The sequence spans 402 residues: Septin CDC11 (402 aa).

Met-1 is subject to N-acetylmethionine. Ser-4 carries the post-translational modification Phosphoserine. A Basic motif motif is present at residues 14-21 (RKRKTLKK). Positions 21 to 307 (KSINFSIMII…ENYRTEALSG (287 aa)) constitute a Septin-type G domain. Residues 31–38 (GESGSGRS) are G1 motif. GTP is bound at residue 31–38 (GESGSGRS). A G3 motif region spans residues 89–92 (DTPN). The G4 motif stretch occupies residues 171 to 174 (SKAD). Residues 172-180 (KADSLTPKE) and Gly-233 contribute to the GTP site. Residues 318–376 (AKQEISESDYLMKEEQIKLEEERLRKFEERVHQDLINKRKELLERENELKEIEKRLLAE) are a coiled coil. A Phosphoserine; by CDC28 modification is found at Ser-394. Phosphoserine; by GIN4 is present on Ser-395.

The protein belongs to the TRAFAC class TrmE-Era-EngA-EngB-Septin-like GTPase superfamily. Septin GTPase family. Component of the septin complex which consists of CDC3, CDC10, CDC11, CDC12 and probably SEP7. The purified septin complex appeared to have a stoichiometry of 2 CDC3, 1 to 2 CDC10, 1 CDC11, 2 CDC12, and 1 or none SEP7 subunit. Interacts with HSL1. Post-translationally, hyphal induction causes immediate phosphorylation at Ser-395 by GIN4 and at Ser-394 by CDC28-CCN1. GIN4 phosphorylation at Ser-395 primes CDC11 for further phosphorylation by CDC28-CCN1. CDC28-HGC1 then maintains CDC11 phosphorylation throughout hyphal growth. Ser-4 is also phosphorylated in yeast cells but not hyphal cells. In terms of processing, met-1 is acetylated.

Its subcellular location is the bud neck. Functionally, septins are GTPases involved in cytokinesis that assemble early in the cell cycle as a patch at the incipient bud site and form a ring before bud emergence, which transforms into an hour-glass shaped collar of cortical filaments that spans both sides of the mother-bud neck. This collar persists until just before cytokinesis, when it splits into two rings that occupy opposite sides of the neck. The septins at the bud neck serve as a structural scaffold that recruits different components involved in diverse processes at specific stages during the cell cycle. Many proteins bind asymmetrically to the septin collar. The septin assembly is regulated by protein kinase GIN4. Septins are also involved in cell morphogenesis, chlamydospores morphogenesis, bud site selection, chitin deposition, cell cycle regulation, cell compartmentalization, and spore wall formation. CDC11 is required for the correct localization of SEC3 at bud tips and bud necks. Plays a key role in invasive growth and virulence. The sequence is that of Septin CDC11 (CDC11) from Candida albicans (strain SC5314 / ATCC MYA-2876) (Yeast).